The primary structure comprises 161 residues: Nucleotide-binding protein Bpro_1596 (161 aa).

The protein belongs to the YajQ family.

Its function is as follows. Nucleotide-binding protein. The sequence is that of Nucleotide-binding protein Bpro_1596 from Polaromonas sp. (strain JS666 / ATCC BAA-500).